The sequence spans 443 residues: Probable glucomannan 4-beta-mannosyltransferase 11 (443 aa).

Residue Asp-52 is part of the active site. Substrate-binding residues include Asp-111 and Asp-113. Asp-205 is a catalytic residue. Helical transmembrane passes span 284–304, 321–341, 400–420, and 421–441; these read IIVH…SVFF, ITLF…FWVL, EMMV…FGKT, and VLYI…IGFI.

It belongs to the glycosyltransferase 2 family. Plant cellulose synthase-like A subfamily.

The protein localises to the golgi apparatus membrane. It catalyses the reaction GDP-mannose + (glucomannan)n = GDP + (glucomannan)n+1.. In terms of biological role, probable mannan synthase which consists of a 4-beta-mannosyltransferase activity on mannan using GDP-mannose. The beta-1,4-mannan product is the backbone for galactomannan synthesis by galactomannan galactosyltransferase. Galactomannan is a noncellulosic polysaccharides of plant cell wall. The polypeptide is Probable glucomannan 4-beta-mannosyltransferase 11 (Arabidopsis thaliana (Mouse-ear cress)).